We begin with the raw amino-acid sequence, 409 residues long: Pentatricopeptide repeat-containing protein At1g01970 (409 aa).

PPR repeat units lie at residues 164 to 198, 199 to 233, 234 to 268, 269 to 303, 304 to 338, and 339 to 373; these read NARD…GFLI, DQVT…GEPL, DYRS…EICA, GREV…GITP, DVKL…GIKA, and TDKC…SIML.

Belongs to the PPR family. P subfamily.

This is Pentatricopeptide repeat-containing protein At1g01970 from Arabidopsis thaliana (Mouse-ear cress).